Consider the following 260-residue polypeptide: HTH-type transcriptional repressor NanR (260 aa).

The HTH gntR-type domain maps to 27 to 95 (KKLSEMVEEE…NGERARISRP (69 aa)). A DNA-binding region (H-T-H motif) is located at residues 55–74 (ERELMAFFNVGRPSVREALA).

This sequence belongs to the NanR family.

Its function is as follows. Transcriptional repressor that controls expression of the genes required for the catabolism of sialic acids. This chain is HTH-type transcriptional repressor NanR, found in Edwardsiella tarda (strain FL6-60).